The chain runs to 256 residues: Ubiquinone/menaquinone biosynthesis C-methyltransferase UbiE (256 aa).

S-adenosyl-L-methionine-binding positions include Thr-79, Asp-100, and 128 to 129 (DA).

The protein belongs to the class I-like SAM-binding methyltransferase superfamily. MenG/UbiE family.

It catalyses the reaction a 2-demethylmenaquinol + S-adenosyl-L-methionine = a menaquinol + S-adenosyl-L-homocysteine + H(+). The catalysed reaction is a 2-methoxy-6-(all-trans-polyprenyl)benzene-1,4-diol + S-adenosyl-L-methionine = a 5-methoxy-2-methyl-3-(all-trans-polyprenyl)benzene-1,4-diol + S-adenosyl-L-homocysteine + H(+). It functions in the pathway quinol/quinone metabolism; menaquinone biosynthesis; menaquinol from 1,4-dihydroxy-2-naphthoate: step 2/2. Its pathway is cofactor biosynthesis; ubiquinone biosynthesis. Functionally, methyltransferase required for the conversion of demethylmenaquinol (DMKH2) to menaquinol (MKH2) and the conversion of 2-polyprenyl-6-methoxy-1,4-benzoquinol (DDMQH2) to 2-polyprenyl-3-methyl-6-methoxy-1,4-benzoquinol (DMQH2). The sequence is that of Ubiquinone/menaquinone biosynthesis C-methyltransferase UbiE from Pseudomonas savastanoi pv. phaseolicola (strain 1448A / Race 6) (Pseudomonas syringae pv. phaseolicola (strain 1448A / Race 6)).